Consider the following 191-residue polypeptide: Peptidyl-tRNA hydrolase (191 aa).

Position 14 (Y14) interacts with tRNA. Catalysis depends on H19, which acts as the Proton acceptor. The tRNA site is built by F64, N66, and N113.

The protein belongs to the PTH family. In terms of assembly, monomer.

It is found in the cytoplasm. It carries out the reaction an N-acyl-L-alpha-aminoacyl-tRNA + H2O = an N-acyl-L-amino acid + a tRNA + H(+). Hydrolyzes ribosome-free peptidyl-tRNAs (with 1 or more amino acids incorporated), which drop off the ribosome during protein synthesis, or as a result of ribosome stalling. Its function is as follows. Catalyzes the release of premature peptidyl moieties from peptidyl-tRNA molecules trapped in stalled 50S ribosomal subunits, and thus maintains levels of free tRNAs and 50S ribosomes. This is Peptidyl-tRNA hydrolase from Fusobacterium nucleatum subsp. nucleatum (strain ATCC 25586 / DSM 15643 / BCRC 10681 / CIP 101130 / JCM 8532 / KCTC 2640 / LMG 13131 / VPI 4355).